A 276-amino-acid chain; its full sequence is Diaminopimelate epimerase (276 aa).

Substrate is bound by residues asparagine 13, glutamine 46, and asparagine 66. Catalysis depends on cysteine 75, which acts as the Proton donor. Residues 76–77 (GN), asparagine 159, asparagine 192, and 210–211 (ER) contribute to the substrate site. Catalysis depends on cysteine 219, which acts as the Proton acceptor. 220-221 (GT) is a binding site for substrate.

The protein belongs to the diaminopimelate epimerase family. In terms of assembly, homodimer.

It localises to the cytoplasm. The enzyme catalyses (2S,6S)-2,6-diaminopimelate = meso-2,6-diaminopimelate. It participates in amino-acid biosynthesis; L-lysine biosynthesis via DAP pathway; DL-2,6-diaminopimelate from LL-2,6-diaminopimelate: step 1/1. Catalyzes the stereoinversion of LL-2,6-diaminopimelate (L,L-DAP) to meso-diaminopimelate (meso-DAP), a precursor of L-lysine and an essential component of the bacterial peptidoglycan. In Pseudomonas entomophila (strain L48), this protein is Diaminopimelate epimerase.